The following is a 156-amino-acid chain: MVRKKSSNTLAENRKARHEYFIEETIEAGIALVGTEVKSIRNGRANLKESYADIRNGEIFILSMHISPYEQGNIFNVEPLREKKLLLHKSEIHRLAGLVSRDGYTLIPLTLYLKAGKVKVALGICKGKKDYDKRDSMLEKAHNREMQRALKERSRY.

This sequence belongs to the SmpB family.

It is found in the cytoplasm. Functionally, required for rescue of stalled ribosomes mediated by trans-translation. Binds to transfer-messenger RNA (tmRNA), required for stable association of tmRNA with ribosomes. tmRNA and SmpB together mimic tRNA shape, replacing the anticodon stem-loop with SmpB. tmRNA is encoded by the ssrA gene; the 2 termini fold to resemble tRNA(Ala) and it encodes a 'tag peptide', a short internal open reading frame. During trans-translation Ala-aminoacylated tmRNA acts like a tRNA, entering the A-site of stalled ribosomes, displacing the stalled mRNA. The ribosome then switches to translate the ORF on the tmRNA; the nascent peptide is terminated with the 'tag peptide' encoded by the tmRNA and targeted for degradation. The ribosome is freed to recommence translation, which seems to be the essential function of trans-translation. This is SsrA-binding protein from Clostridium botulinum (strain Alaska E43 / Type E3).